A 248-amino-acid polypeptide reads, in one-letter code: Ribonuclease 3 (248 aa).

The region spanning 16 to 145 is the RNase III domain; sequence TEGLETSIGY…LLAAMYLDGG (130 aa). Glu-58 serves as a coordination point for Mg(2+). Asp-62 is an active-site residue. The Mg(2+) site is built by Asn-131 and Glu-134. The active site involves Glu-134. Residues 172-241 form the DRBM domain; the sequence is DFKTDFQELA…ARQCLERLET (70 aa).

Belongs to the ribonuclease III family. Homodimer. Mg(2+) serves as cofactor.

It is found in the cytoplasm. The enzyme catalyses Endonucleolytic cleavage to 5'-phosphomonoester.. In terms of biological role, digests double-stranded RNA. Involved in the processing of primary rRNA transcript to yield the immediate precursors to the large and small rRNAs (23S and 16S). Processes some mRNAs, and tRNAs when they are encoded in the rRNA operon. Processes pre-crRNA and tracrRNA of type II CRISPR loci if present in the organism. This is Ribonuclease 3 from Geobacter sulfurreducens (strain ATCC 51573 / DSM 12127 / PCA).